The following is a 142-amino-acid chain: Large ribosomal subunit protein uL13 (142 aa).

This sequence belongs to the universal ribosomal protein uL13 family. In terms of assembly, part of the 50S ribosomal subunit.

This protein is one of the early assembly proteins of the 50S ribosomal subunit, although it is not seen to bind rRNA by itself. It is important during the early stages of 50S assembly. This chain is Large ribosomal subunit protein uL13, found in Helicobacter hepaticus (strain ATCC 51449 / 3B1).